The following is a 555-amino-acid chain: Potassium-transporting ATPase potassium-binding subunit (555 aa).

10 helical membrane passes run 2-22 (IWVA…PTGI), 60-80 (QYAL…YFIF), 130-150 (IGIT…VMAF), 173-193 (VFLP…VPQT), 246-266 (MSNI…PFTY), 278-298 (ILFV…TTSE), 374-394 (AGFV…GLMV), 412-432 (LIAV…ALAL), 483-503 (LVMF…AASL), and 525-545 (GIFI…MLVL).

Belongs to the KdpA family. As to quaternary structure, the system is composed of three essential subunits: KdpA, KdpB and KdpC.

The protein localises to the cell membrane. Its function is as follows. Part of the high-affinity ATP-driven potassium transport (or Kdp) system, which catalyzes the hydrolysis of ATP coupled with the electrogenic transport of potassium into the cytoplasm. This subunit binds the extracellular potassium ions and delivers the ions to the membrane domain of KdpB through an intramembrane tunnel. The chain is Potassium-transporting ATPase potassium-binding subunit from Bacillus cereus (strain ZK / E33L).